Here is a 336-residue protein sequence, read N- to C-terminus: C2H2 finger domain transcription factor mtfA (336 aa).

Positions 1 to 245 are disordered; it reads MDVASLISPS…PSPGHQQMIS (245 aa). 2 stretches are compositionally biased toward polar residues: residues 7–29 and 36–56; these read ISPSESDTVPTFRSRSIQNSSAS and EQSTGSYFSAVPTHTTSYSRT. Residues 136–149 show a composition bias toward low complexity; it reads SPSTSSVSAASSSA. Over residues 168–181 the composition is skewed to polar residues; the sequence is TDRSSISSQGSVQH. The span at 182–210 shows a compositional bias: low complexity; it reads AASAPYASPAPSVSSFSSPIEPSTPSTAA. The span at 216-245 shows a compositional bias: polar residues; the sequence is PAPNTFQNPSPFPQTSTASLPSPGHQQMIS. C2H2-type zinc fingers lie at residues 272–294 and 300–325; these read YICRTCHKAFSRPSSLRIHSHSH and FRCTHAGCGKAFSVRSNMKRHERGCH.

It localises to the nucleus. In terms of biological role, transcription factor that controls morphogenesis and virulence. Acts as a positive regulator of gliotixin and protease production. The polypeptide is C2H2 finger domain transcription factor mtfA (Aspergillus fumigatus (strain CBS 144.89 / FGSC A1163 / CEA10) (Neosartorya fumigata)).